The sequence spans 250 residues: Aliphatic sulfonates import ATP-binding protein SsuB 2 (250 aa).

Positions 13 to 229 (VRLQGLTRSF…SYRDPLLGEY (217 aa)) constitute an ABC transporter domain. ATP is bound at residue 45–52 (GHSGSGKS).

It belongs to the ABC transporter superfamily. Aliphatic sulfonates importer (TC 3.A.1.17.2) family. As to quaternary structure, the complex is composed of two ATP-binding proteins (SsuB), two transmembrane proteins (SsuC) and a solute-binding protein (SsuA).

Its subcellular location is the cell membrane. The catalysed reaction is ATP + H2O + aliphatic sulfonate-[sulfonate-binding protein]Side 1 = ADP + phosphate + aliphatic sulfonateSide 2 + [sulfonate-binding protein]Side 1.. Its function is as follows. Part of the ABC transporter complex SsuABC involved in aliphatic sulfonates import. Responsible for energy coupling to the transport system. This is Aliphatic sulfonates import ATP-binding protein SsuB 2 from Streptomyces avermitilis (strain ATCC 31267 / DSM 46492 / JCM 5070 / NBRC 14893 / NCIMB 12804 / NRRL 8165 / MA-4680).